The chain runs to 649 residues: Acetyl-coenzyme A synthetase (649 aa).

Residues 191 to 194, T309, and N333 contribute to the CoA site; that span reads RGGR. Residues 385 to 387, 409 to 414, D498, and R513 contribute to the ATP site; these read GEP and DTWWQT. S521 provides a ligand contact to CoA. R524 serves as a coordination point for ATP. Mg(2+) contacts are provided by V535, H537, and V540. R582 contacts CoA. N6-acetyllysine is present on K607.

Belongs to the ATP-dependent AMP-binding enzyme family. Mg(2+) is required as a cofactor. Acetylated. Deacetylation by the SIR2-homolog deacetylase activates the enzyme.

It catalyses the reaction acetate + ATP + CoA = acetyl-CoA + AMP + diphosphate. Its function is as follows. Catalyzes the conversion of acetate into acetyl-CoA (AcCoA), an essential intermediate at the junction of anabolic and catabolic pathways. AcsA undergoes a two-step reaction. In the first half reaction, AcsA combines acetate with ATP to form acetyl-adenylate (AcAMP) intermediate. In the second half reaction, it can then transfer the acetyl group from AcAMP to the sulfhydryl group of CoA, forming the product AcCoA. The chain is Acetyl-coenzyme A synthetase from Novosphingobium aromaticivorans (strain ATCC 700278 / DSM 12444 / CCUG 56034 / CIP 105152 / NBRC 16084 / F199).